The sequence spans 167 residues: Bacterial non-heme ferritin (167 aa).

The Ferritin-like diiron domain occupies 2–145; it reads LNKELLDALN…THIDYLNRIG (144 aa). Fe cation-binding residues include Glu17, Glu50, His53, Glu94, and Gln127.

The protein belongs to the ferritin family. Prokaryotic subfamily.

It localises to the cytoplasm. It carries out the reaction 4 Fe(2+) + O2 + 6 H2O = 4 iron(III) oxide-hydroxide + 12 H(+). In terms of biological role, iron-storage protein. This is Bacterial non-heme ferritin (ftnA) from Staphylococcus saprophyticus subsp. saprophyticus (strain ATCC 15305 / DSM 20229 / NCIMB 8711 / NCTC 7292 / S-41).